The following is a 728-amino-acid chain: Catalase-peroxidase 2 (728 aa).

Positions 1 to 20 (MSNEGKCPFNHGKRNGTTNR) are disordered. Residues 91–214 (WHSAGTYRTG…LAAVQMGLIY (124 aa)) constitute a cross-link (tryptophyl-tyrosyl-methioninium (Trp-Tyr) (with M-240)). Histidine 92 serves as the catalytic Proton acceptor. Residues 214-240 (YVNPEGPNGNPDPLASARDIRETFARM) constitute a cross-link (tryptophyl-tyrosyl-methioninium (Tyr-Met) (with W-91)). Residue histidine 255 coordinates heme b. Residues 335–355 (AHQWQPKGGAGADSVPDPFEP) are disordered.

It belongs to the peroxidase family. Peroxidase/catalase subfamily. Homodimer or homotetramer. The cofactor is heme b. Post-translationally, formation of the three residue Trp-Tyr-Met cross-link is important for the catalase, but not the peroxidase activity of the enzyme.

The catalysed reaction is H2O2 + AH2 = A + 2 H2O. It catalyses the reaction 2 H2O2 = O2 + 2 H2O. Functionally, bifunctional enzyme with both catalase and broad-spectrum peroxidase activity. This Burkholderia cenocepacia (strain HI2424) protein is Catalase-peroxidase 2.